We begin with the raw amino-acid sequence, 555 residues long: Protein PLASTID TRANSCRIPTIONALLY ACTIVE 12, chloroplastic (555 aa).

The transit peptide at 1–58 (MASCYNPWRLFPGMSTAVPAGPVTAPAHSRTCKSSKVFSALPHRRGLLFLGTRRARIK) directs the protein to the chloroplast. 3 disordered regions span residues 80 to 100 (YFDS…SIPG), 115 to 167 (ARAP…EPDV), and 468 to 541 (SYNE…IDDS). A compositionally biased stretch (polar residues) spans 144–154 (QVTSASGTEGA). 2 stretches are compositionally biased toward acidic residues: residues 471-480 (EDSDDEDEDV) and 490-502 (LEDE…DVAE). The span at 508 to 519 (NQNWSALKSTGQ) shows a compositional bias: polar residues. The span at 521 to 538 (EKPKEKSKKDEMTLKEAI) shows a compositional bias: basic and acidic residues.

As to quaternary structure, component of the plastid-encoded plastid RNA polymerase (PEP) complex.

The protein localises to the plastid. It is found in the chloroplast stroma. It localises to the nucleus. Its function is as follows. Required for the activity of the plastid-encoded RNA polymerase (PEP) and full expression of genes transcribed by PEP. Required for the proper build-up and formation of the PEP-complex. Binds single-stranded (ss) DNA and RNA, but not double-stranded (ds) DNA. The protein is Protein PLASTID TRANSCRIPTIONALLY ACTIVE 12, chloroplastic of Zea mays (Maize).